The following is a 605-amino-acid chain: NADH-ubiquinone oxidoreductase chain 5 (605 aa).

Helical transmembrane passes span 11–31, 49–69, 77–97, 120–140, 141–161, 178–198, 202–222, 244–264, 273–295, 302–322, 325–345, 371–391, 408–425, 457–477, 488–508, and 584–604; these read ILITELLILALSALMTMLPPI, LSLTSILIHILIEEPSSISSL, LAMSIKIDYYSLIFISIALFI, MFLLLFLMSMIMFIAANNFFP, MLVGWGTMGLMSYLLISWWHG, LADIGFILTFSWCITYMSSLD, FFATSTLVTGVPILGMLMAAM, VSALLHSSTMVTAGVYLLIGM, GFSEACLTMGAATALYASFKALL, IIAFSTLSQLGFMMATVGLNH, LAFMHLCMHAFFKAMMFLCAG, ASCFTLSTLALAGFPFLTGFF, LWATMLLISTMFTAIYSL, LALASIVTGSLFSLFTPPIYT, LAALTLTFMSAFLAMYLISLA, and IKTYFMAFLVTFVIILYIMLF.

This sequence belongs to the complex I subunit 5 family.

The protein resides in the mitochondrion inner membrane. It catalyses the reaction a ubiquinone + NADH + 5 H(+)(in) = a ubiquinol + NAD(+) + 4 H(+)(out). Its function is as follows. Core subunit of the mitochondrial membrane respiratory chain NADH dehydrogenase (Complex I) that is believed to belong to the minimal assembly required for catalysis. Complex I functions in the transfer of electrons from NADH to the respiratory chain. The immediate electron acceptor for the enzyme is believed to be ubiquinone. The chain is NADH-ubiquinone oxidoreductase chain 5 (MT-ND5) from Pelomedusa subrufa (African side-necked turtle).